The sequence spans 474 residues: Chromosomal replication initiator protein DnaA (474 aa).

The segment at 1 to 90 is domain I, interacts with DnaA modulators; sequence MSSSLWLQCL…RQVVVPSSQI (90 aa). The interval 91–137 is domain II; sequence IAPAAPAVTLAPRPLPATRILQDDAPSRSWEPAPSPVQPESKSGYRS. Residues 112–137 form a disordered region; the sequence is QDDAPSRSWEPAPSPVQPESKSGYRS. Residues 128 to 137 show a composition bias toward polar residues; it reads QPESKSGYRS. A domain III, AAA+ region region spans residues 138–354; that stretch reads NVNPKHNFNN…GALNRVIANA (217 aa). ATP-binding residues include G182, G184, K185, and T186. The interval 355–474 is domain IV, binds dsDNA; that stretch reads NFTGRAITID…YSNLIRTLST (120 aa).

This sequence belongs to the DnaA family. As to quaternary structure, oligomerizes as a right-handed, spiral filament on DNA at oriC.

Its subcellular location is the cytoplasm. Plays an essential role in the initiation and regulation of chromosomal replication. ATP-DnaA binds to the origin of replication (oriC) to initiate formation of the DNA replication initiation complex once per cell cycle. Binds the DnaA box (a 9 base pair repeat at the origin) and separates the double-stranded (ds)DNA. Forms a right-handed helical filament on oriC DNA; dsDNA binds to the exterior of the filament while single-stranded (ss)DNA is stabiized in the filament's interior. The ATP-DnaA-oriC complex binds and stabilizes one strand of the AT-rich DNA unwinding element (DUE), permitting loading of DNA polymerase. After initiation quickly degrades to an ADP-DnaA complex that is not apt for DNA replication. Binds acidic phospholipids. This Photobacterium profundum (strain SS9) protein is Chromosomal replication initiator protein DnaA.